The sequence spans 336 residues: tRNA N6-adenosine threonylcarbamoyltransferase (336 aa).

H112 and H116 together coordinate Fe cation. Residues 136–140, D169, G182, and N276 contribute to the substrate site; that span reads LVSGG. D304 serves as a coordination point for Fe cation.

The protein belongs to the KAE1 / TsaD family. The cofactor is Fe(2+).

It localises to the cytoplasm. It carries out the reaction L-threonylcarbamoyladenylate + adenosine(37) in tRNA = N(6)-L-threonylcarbamoyladenosine(37) in tRNA + AMP + H(+). Its function is as follows. Required for the formation of a threonylcarbamoyl group on adenosine at position 37 (t(6)A37) in tRNAs that read codons beginning with adenine. Is involved in the transfer of the threonylcarbamoyl moiety of threonylcarbamoyl-AMP (TC-AMP) to the N6 group of A37, together with TsaE and TsaB. TsaD likely plays a direct catalytic role in this reaction. In Francisella tularensis subsp. tularensis (strain FSC 198), this protein is tRNA N6-adenosine threonylcarbamoyltransferase.